Here is a 430-residue protein sequence, read N- to C-terminus: Dihydrolipoyllysine-residue acetyltransferase component of pyruvate dehydrogenase complex (430 aa).

The 76-residue stretch at 2–77 (AFEFRLPDIG…VVGDVIVKID (76 aa)) folds into the Lipoyl-binding domain. K43 is modified (N6-lipoyllysine). The interval 80–122 (DAEDMQFKGHDDDSSSKEEPAKEEAPAEQAPVATQTEEVDENR) is disordered. The span at 84–104 (MQFKGHDDDSSSKEEPAKEEA) shows a compositional bias: basic and acidic residues. Positions 125 to 162 (KAMPSVRKYAREKGVNIKAVSGSGKNGRITKEDVDAYL) constitute a Peripheral subunit-binding (PSBD) domain. The tract at residues 164–200 (GGAPTASNESADSATNEEVAETPAAPAAVSLEGDFPE) is disordered. A compositionally biased stretch (low complexity) spans 177–192 (ATNEEVAETPAAPAAV). H401 is a catalytic residue.

It belongs to the 2-oxoacid dehydrogenase family. Forms a 24-polypeptide structural core with octahedral symmetry. It depends on (R)-lipoate as a cofactor.

The catalysed reaction is N(6)-[(R)-dihydrolipoyl]-L-lysyl-[protein] + acetyl-CoA = N(6)-[(R)-S(8)-acetyldihydrolipoyl]-L-lysyl-[protein] + CoA. The pyruvate dehydrogenase complex catalyzes the overall conversion of pyruvate to acetyl-CoA and CO(2). It contains multiple copies of three enzymatic components: pyruvate dehydrogenase (E1), dihydrolipoamide acetyltransferase (E2) and lipoamide dehydrogenase (E3). This Staphylococcus aureus protein is Dihydrolipoyllysine-residue acetyltransferase component of pyruvate dehydrogenase complex (pdhC).